Here is an 882-residue protein sequence, read N- to C-terminus: Alanine--tRNA ligase (882 aa).

Zn(2+) is bound by residues His-571, His-575, Cys-673, and His-677.

It belongs to the class-II aminoacyl-tRNA synthetase family. The cofactor is Zn(2+).

The protein resides in the cytoplasm. It carries out the reaction tRNA(Ala) + L-alanine + ATP = L-alanyl-tRNA(Ala) + AMP + diphosphate. In terms of biological role, catalyzes the attachment of alanine to tRNA(Ala) in a two-step reaction: alanine is first activated by ATP to form Ala-AMP and then transferred to the acceptor end of tRNA(Ala). Also edits incorrectly charged Ser-tRNA(Ala) and Gly-tRNA(Ala) via its editing domain. The sequence is that of Alanine--tRNA ligase from Stenotrophomonas maltophilia (strain K279a).